Reading from the N-terminus, the 245-residue chain is 1-(5-phosphoribosyl)-5-[(5-phosphoribosylamino)methylideneamino] imidazole-4-carboxamide isomerase (245 aa).

The Proton acceptor role is filled by Asp-7. Catalysis depends on Asp-129, which acts as the Proton donor.

It belongs to the HisA/HisF family.

The protein resides in the cytoplasm. It catalyses the reaction 1-(5-phospho-beta-D-ribosyl)-5-[(5-phospho-beta-D-ribosylamino)methylideneamino]imidazole-4-carboxamide = 5-[(5-phospho-1-deoxy-D-ribulos-1-ylimino)methylamino]-1-(5-phospho-beta-D-ribosyl)imidazole-4-carboxamide. It functions in the pathway amino-acid biosynthesis; L-histidine biosynthesis; L-histidine from 5-phospho-alpha-D-ribose 1-diphosphate: step 4/9. The protein is 1-(5-phosphoribosyl)-5-[(5-phosphoribosylamino)methylideneamino] imidazole-4-carboxamide isomerase of Erwinia tasmaniensis (strain DSM 17950 / CFBP 7177 / CIP 109463 / NCPPB 4357 / Et1/99).